The following is a 655-amino-acid chain: MGIFSIANQHIRFAVKLATAIVLALFVGFHFQLETPRWAVLTAAIVAAGPAFAAGGEPYSGAIRYRGFLRIIGTFIGCIAGLVIIIAMIRAPLLMILVCCIWAGFCTWISSLVRIENSYAWGLAGYTALIIVITIQPEPLLTPQFAVERCSEIVIGIVCAIMADLLFSPRSIKQEVDRELESLLVAQYQLMQLCIKHGDGEVVDKAWGDLVRRTTALQGMRSNLNMESSRWARANRRLKAINTLSLTLITQSCETYLIQNTRPELITDTFREFFDTPVETAQDVHKQLKRLRRVIAWTGERETPVTIYSWVAAATRYQLLKRGVISNTKINATEEEILQGEPEVKVESAERHHAMVNFWRTTLSCILGTLFWLWTGWTSGSGAMVMIAVVTSLAMRLPNPRMVAIDFIYGTLAALPLGLLYFLVIIPNTQQSMLLLCISLAVLGFFLGIEVQQRRLGSMGALASTINIIVLDNPMTFHFSQFLDSALGQIVGCVLAFTVILLVRDKSRDRTGRVLLNQFVSAAVSAMTTNVARRKENHLPALYQQLFLLMNKFPGDLPKFRLALTMIIAHQRLRDAPIPVNEDLSAFHRQMRRTADHVISARSDDKRRRYFGQLLEELEIYQEKLRIWQAPPQVTEPVHRLAGMLHKYQHALTDS.

The next 11 membrane-spanning stretches (helical) occupy residues 13-33, 38-58, 69-89, 93-113, 121-141, 152-172, 370-390, 407-427, 431-451, 459-479, and 482-502; these read FAVKLATAIVLALFVGFHFQL, WAVLTAAIVAAGPAFAAGGEP, LRIIGTFIGCIAGLVIIIAMI, LLMILVCCIWAGFCTWISSLV, WGLAGYTALIIVITIQPEPLL, EIVIGIVCAIMADLLFSPRSI, LFWLWTGWTSGSGAMVMIAVV, FIYGTLAALPLGLLYFLVIIP, QSMLLLCISLAVLGFFLGIEV, MGALASTINIIVLDNPMTFHF, and FLDSALGQIVGCVLAFTVILL.

The protein belongs to the aromatic acid exporter ArAE (TC 2.A.85) family.

It is found in the cell inner membrane. Forms an efflux pump with AaeA. Could function as a metabolic relief valve, allowing to eliminate certain compounds when they accumulate to high levels in the cell. The sequence is that of p-hydroxybenzoic acid efflux pump subunit AaeB from Shigella boydii serotype 18 (strain CDC 3083-94 / BS512).